Here is a 459-residue protein sequence, read N- to C-terminus: ATP-binding protein Uup-like (459 aa).

Residues 132–350 (FEMEDVSYEI…QQANFWASKA (219 aa)) form the ABC transporter domain. 164-171 (GPNGCGKT) provides a ligand contact to ATP. Residues 357 to 375 (AKKSEPLKEESAVKNDRTS) show a composition bias toward basic and acidic residues. Residues 357–381 (AKKSEPLKEESAVKNDRTSKPKSVK) are disordered.

This sequence belongs to the ABC transporter superfamily. ABCF family. Uup subfamily.

The protein localises to the cytoplasm. It catalyses the reaction ATP + H2O = ADP + phosphate + H(+). Might play a role in ribosome assembly or function; this is missing the first ABC transporter domain compared to paralogs. The chain is ATP-binding protein Uup-like (uup-B) from Haemophilus influenzae (strain ATCC 51907 / DSM 11121 / KW20 / Rd).